The primary structure comprises 503 residues: Cytochrome P450 3A7 (503 aa).

C442 is a binding site for heme.

Belongs to the cytochrome P450 family. Heme serves as cofactor. In terms of tissue distribution, expressed in fetal liver (at protein level).

Its subcellular location is the endoplasmic reticulum membrane. It localises to the microsome membrane. The catalysed reaction is an organic molecule + reduced [NADPH--hemoprotein reductase] + O2 = an alcohol + oxidized [NADPH--hemoprotein reductase] + H2O + H(+). The enzyme catalyses 3beta-hydroxyandrost-5-en-17-one + reduced [NADPH--hemoprotein reductase] + O2 = 3beta,16alpha-dihydroxy-androst-5-en-17-one + oxidized [NADPH--hemoprotein reductase] + H2O + H(+). It carries out the reaction dehydroepiandrosterone 3-sulfate + reduced [NADPH--hemoprotein reductase] + O2 = 16alpha-hydroxydehydroepiandrosterone 3-sulfate + oxidized [NADPH--hemoprotein reductase] + H2O + H(+). It catalyses the reaction testosterone + reduced [NADPH--hemoprotein reductase] + O2 = 6beta,17beta-dihydroxyandrost-4-en-3-one + oxidized [NADPH--hemoprotein reductase] + H2O + H(+). The catalysed reaction is estrone + reduced [NADPH--hemoprotein reductase] + O2 = 2-hydroxyestrone + oxidized [NADPH--hemoprotein reductase] + H2O + H(+). The enzyme catalyses estrone + reduced [NADPH--hemoprotein reductase] + O2 = 4-hydroxyestrone + oxidized [NADPH--hemoprotein reductase] + H2O + H(+). It carries out the reaction estrone + reduced [NADPH--hemoprotein reductase] + O2 = 16alpha-hydroxyestrone + oxidized [NADPH--hemoprotein reductase] + H2O + H(+). It catalyses the reaction 17beta-estradiol + reduced [NADPH--hemoprotein reductase] + O2 = 2-hydroxy-17beta-estradiol + oxidized [NADPH--hemoprotein reductase] + H2O + H(+). The catalysed reaction is 17beta-estradiol + reduced [NADPH--hemoprotein reductase] + O2 = 6beta-hydroxyestradiol-17beta + oxidized [NADPH--hemoprotein reductase] + H2O + H(+). The enzyme catalyses all-trans-retinoate + reduced [NADPH--hemoprotein reductase] + O2 = all-trans-4-hydroxyretinoate + oxidized [NADPH--hemoprotein reductase] + H2O + H(+). It carries out the reaction all-trans-retinoate + reduced [NADPH--hemoprotein reductase] + O2 = all-trans-18-hydroxyretinoate + oxidized [NADPH--hemoprotein reductase] + H2O + H(+). The protein operates within steroid hormone biosynthesis. It functions in the pathway cofactor metabolism; retinol metabolism. A cytochrome P450 monooxygenase involved in the metabolism of steroid hormones and vitamins during embryogenesis. Mechanistically, uses molecular oxygen inserting one oxygen atom into a substrate, and reducing the second into a water molecule, with two electrons provided by NADPH via cytochrome P450 reductase (NADPH--hemoprotein reductase). Catalyzes the hydroxylation of carbon-hydrogen bonds. Metabolizes 3beta-hydroxyandrost-5-en-17-one (dehydroepiandrosterone, DHEA), a precursor in the biosynthesis of androgen and estrogen steroid hormones. Exhibits high catalytic activity for the formation of hydroxyestrogens from estrone (E1), particularly D-ring hydroxylated estrone at the C16-alpha position. Mainly hydroxylates all trans-retinoic acid (atRA) to 4-hydroxyretinoate and may play a role in atRA clearance during fetal development. Also involved in the oxidative metabolism of xenobiotics including anticonvulsants. The protein is Cytochrome P450 3A7 of Homo sapiens (Human).